Here is a 101-residue protein sequence, read N- to C-terminus: NAD(P)H-quinone oxidoreductase subunit 4L, chloroplastic (101 aa).

Transmembrane regions (helical) follow at residues 2-22, 32-52, and 61-81; these read MLEHVLVLSAYLFSIGIYGLI, MCLELILNAVNINLVTFSDLF, and IFSIFVIAIAAAEAAIGPAIV.

The protein belongs to the complex I subunit 4L family. In terms of assembly, NDH is composed of at least 16 different subunits, 5 of which are encoded in the nucleus.

The protein localises to the plastid. It localises to the chloroplast thylakoid membrane. The catalysed reaction is a plastoquinone + NADH + (n+1) H(+)(in) = a plastoquinol + NAD(+) + n H(+)(out). The enzyme catalyses a plastoquinone + NADPH + (n+1) H(+)(in) = a plastoquinol + NADP(+) + n H(+)(out). In terms of biological role, NDH shuttles electrons from NAD(P)H:plastoquinone, via FMN and iron-sulfur (Fe-S) centers, to quinones in the photosynthetic chain and possibly in a chloroplast respiratory chain. The immediate electron acceptor for the enzyme in this species is believed to be plastoquinone. Couples the redox reaction to proton translocation, and thus conserves the redox energy in a proton gradient. In Illicium oligandrum (Star anise), this protein is NAD(P)H-quinone oxidoreductase subunit 4L, chloroplastic.